A 300-amino-acid chain; its full sequence is Aspartate carbamoyltransferase catalytic subunit (300 aa).

2 residues coordinate carbamoyl phosphate: Arg54 and Thr55. Lys82 contributes to the L-aspartate binding site. Residues Arg104, His131, and Gln134 each contribute to the carbamoyl phosphate site. L-aspartate is bound by residues Arg164 and Arg213. Ala256 and Pro257 together coordinate carbamoyl phosphate.

The protein belongs to the aspartate/ornithine carbamoyltransferase superfamily. ATCase family. Heterododecamer (2C3:3R2) of six catalytic PyrB chains organized as two trimers (C3), and six regulatory PyrI chains organized as three dimers (R2).

It carries out the reaction carbamoyl phosphate + L-aspartate = N-carbamoyl-L-aspartate + phosphate + H(+). The protein operates within pyrimidine metabolism; UMP biosynthesis via de novo pathway; (S)-dihydroorotate from bicarbonate: step 2/3. Functionally, catalyzes the condensation of carbamoyl phosphate and aspartate to form carbamoyl aspartate and inorganic phosphate, the committed step in the de novo pyrimidine nucleotide biosynthesis pathway. The sequence is that of Aspartate carbamoyltransferase catalytic subunit from Malacoplasma penetrans (strain HF-2) (Mycoplasma penetrans).